A 189-amino-acid polypeptide reads, in one-letter code: UPF0301 protein RC0043 (189 aa).

Belongs to the UPF0301 (AlgH) family.

The protein is UPF0301 protein RC0043 of Rickettsia conorii (strain ATCC VR-613 / Malish 7).